Here is a 301-residue protein sequence, read N- to C-terminus: Putative phosphoenolpyruvate synthase regulatory protein (301 aa).

Over residues 1 to 24 the composition is skewed to low complexity; that stretch reads MSEPVAPDGAQPAPAGATPQPLQP. The interval 1–27 is disordered; the sequence is MSEPVAPDGAQPAPAGATPQPLQPIAG. 181-188 contributes to the ADP binding site; it reads GVSRSGKT.

Belongs to the pyruvate, phosphate/water dikinase regulatory protein family. PSRP subfamily.

It carries out the reaction [pyruvate, water dikinase] + ADP = [pyruvate, water dikinase]-phosphate + AMP + H(+). The catalysed reaction is [pyruvate, water dikinase]-phosphate + phosphate + H(+) = [pyruvate, water dikinase] + diphosphate. In terms of biological role, bifunctional serine/threonine kinase and phosphorylase involved in the regulation of the phosphoenolpyruvate synthase (PEPS) by catalyzing its phosphorylation/dephosphorylation. The protein is Putative phosphoenolpyruvate synthase regulatory protein of Cupriavidus pinatubonensis (strain JMP 134 / LMG 1197) (Cupriavidus necator (strain JMP 134)).